The sequence spans 485 residues: Adenylate kinase 8 (485 aa).

Adenylate kinase regions lie at residues 58-258 (PRVF…TFVL) and 269-472 (PRIL…YTVS). 67 to 72 (ASGKHT) is a binding site for ATP. Residues 87–113 (TPESVLSSDVSLLAKEAQSYRDKGQEV) form an NMP 1 region. AMP is bound by residues 140–143 (GFPK) and Q147. Positions 177–206 (GKRIDTANGEVYHTTFDWPSDPTVQRNLVE) are LID 1. R218 contributes to the AMP binding site. 278–283 (GSGRSL) provides a ligand contact to ATP. The segment at 298–327 (CCGQVLKEAVADQTKLGEVIQPYIENDQQV) is NMP 2. AMP contacts are provided by residues 325 to 327 (QQV), 354 to 357 (GFPR), and Q361. Residues 391 to 424 (LCMTDPVSGERYHDIYKPAPSSEVHERLQQNPRH) are LID 2. R432 is a binding site for AMP.

It belongs to the adenylate kinase family.

The protein localises to the cytoplasm. It is found in the cytosol. The enzyme catalyses AMP + ATP = 2 ADP. The catalysed reaction is a 2'-deoxyribonucleoside 5'-diphosphate + ATP = a 2'-deoxyribonucleoside 5'-triphosphate + ADP. It catalyses the reaction a ribonucleoside 5'-diphosphate + ATP = a ribonucleoside 5'-triphosphate + ADP. In terms of biological role, nucleoside monophosphate (NMP) kinase that catalyzes the reversible transfer of the terminal phosphate group between nucleoside triphosphates and monophosphates. Has highest activity toward AMP, and weaker activity toward dAMP, CMP and dCMP. Also displays broad nucleoside diphosphate kinase activity. The chain is Adenylate kinase 8 (ak8) from Xenopus tropicalis (Western clawed frog).